Here is a 279-residue protein sequence, read N- to C-terminus: Pantothenate synthetase (279 aa).

31–38 (MGALHEGH) is a binding site for ATP. Histidine 38 acts as the Proton donor in catalysis. (R)-pantoate is bound at residue glutamine 62. Glutamine 62 is a binding site for beta-alanine. Residue 148-151 (GEKD) participates in ATP binding. Residue glutamine 154 coordinates (R)-pantoate. Residues valine 177 and 185–188 (LSSR) contribute to the ATP site.

It belongs to the pantothenate synthetase family. As to quaternary structure, homodimer.

Its subcellular location is the cytoplasm. The enzyme catalyses (R)-pantoate + beta-alanine + ATP = (R)-pantothenate + AMP + diphosphate + H(+). It participates in cofactor biosynthesis; (R)-pantothenate biosynthesis; (R)-pantothenate from (R)-pantoate and beta-alanine: step 1/1. Functionally, catalyzes the condensation of pantoate with beta-alanine in an ATP-dependent reaction via a pantoyl-adenylate intermediate. The chain is Pantothenate synthetase from Cereibacter sphaeroides (strain ATCC 17023 / DSM 158 / JCM 6121 / CCUG 31486 / LMG 2827 / NBRC 12203 / NCIMB 8253 / ATH 2.4.1.) (Rhodobacter sphaeroides).